Reading from the N-terminus, the 197-residue chain is Signal-regulatory protein delta (197 aa).

The N-terminal stretch at 1–29 is a signal peptide; sequence MPIPASPLHPPLPSLLLYLLLELAGVTHV. The region spanning 31-135 is the Ig-like V-type domain; the sequence is HVQQTEMSQT…IKEYQSGRGT (105 aa). Cys51 and Cys117 form a disulfide bridge. The tract at residues 139–158 is disordered; it reads VTEQNPRPPKNRPAGRAGSR. Asn174 is a glycosylation site (N-linked (GlcNAc...) asparagine).

It localises to the secreted. This chain is Signal-regulatory protein delta (SIRPD), found in Homo sapiens (Human).